Reading from the N-terminus, the 427-residue chain is Mitogen-activated protein kinase 8 (427 aa).

Residues 26–321 form the Protein kinase domain; it reads YQNLKPIGSG…VDEALQHPYI (296 aa). ATP-binding positions include 32–40 and Lys-55; that span reads IGSGAQGIV. Cys-116 is modified (S-nitrosocysteine). Asp-151 functions as the Proton acceptor in the catalytic mechanism. Thr-183 carries the post-translational modification Phosphothreonine; by MAP2K7. The short motif at 183-185 is the TXY element; it reads TPY. The residue at position 185 (Tyr-185) is a Phosphotyrosine; by MAP2K4. Phosphoserine is present on residues Met-301 and Ser-377. The tract at residues 371–427 is disordered; that stretch reads VIRGQPSPLGAAVINGSQHPSSSSSVNDVSSMSTDPTLASDTDSSLEAAAGPLGCCR. Residues 387 to 403 show a composition bias toward low complexity; that stretch reads SQHPSSSSSVNDVSSMS. The segment covering 404-415 has biased composition (polar residues); it reads TDPTLASDTDSS.

Belongs to the protein kinase superfamily. CMGC Ser/Thr protein kinase family. MAP kinase subfamily. In terms of assembly, forms a complex with MAPK8IP1 and ARHGEF28. Found in a complex with SH3RF1, RAC1, MAP3K11/MLK3, MAP2K7/MKK7 and MAPK8IP1/JIP1. Found in a complex with SH3RF1, RAC2, MAP3K7/TAK1, MAP2K7/MKK7, MAPK8IP1/JIP1 and MAPK9/JNK2. Binds to at least four scaffolding proteins, MAPK8IP1/JIP-1, MAPK8IP2/JIP-2, MAPK8IP3/JIP-3/JSAP1 and SPAG9/MAPK8IP4/JIP-4. These proteins also bind other components of the JNK signaling pathway. Interacts with TP53 and WWOX. Interacts with JAMP. Interacts with HSF1 (via D domain and preferentially with hyperphosphorylated form); this interaction occurs under both normal growth conditions and immediately upon heat shock. Interacts (phosphorylated form) with NFE2; the interaction phosphorylates NFE2 in undifferentiated cells. Interacts with NFATC4. Interacts with MECOM; regulates JNK signaling. Interacts with PIN1; this interaction mediates MAPK8 conformational changes leading to the binding of MAPK8 to its substrates. Interacts with GRIPAP1. Interacts with POU5F1; phosphorylates POU5F1 at 'Ser-355'. Interacts with STMN2, STMN3 and STMN4. Interacts with HSF4. Mg(2+) is required as a cofactor. Dually phosphorylated on Thr-183 and Tyr-185 by MAP2K7 and MAP2K4, which activates the enzyme. Phosphorylated by TAOK2. May be phosphorylated at Thr-183 and Tyr-185 by MAP3K1/MEKK1. Phosphorylated form is more concentrated at synapses than none-phosphorylated.

The protein localises to the cytoplasm. It localises to the nucleus. Its subcellular location is the synapse. The catalysed reaction is L-seryl-[protein] + ATP = O-phospho-L-seryl-[protein] + ADP + H(+). The enzyme catalyses L-threonyl-[protein] + ATP = O-phospho-L-threonyl-[protein] + ADP + H(+). Its activity is regulated as follows. Activated by threonine and tyrosine phosphorylation by either of two dual specificity kinases, MAP2K4 and MAP2K7. MAP2K4 shows a strong preference for Tyr-185 while MAP2K7 phosphorylates Tyr-183 preferentially. Inhibited by dual specificity phosphatases, such as DUSP1. Inhibited by SERPINB3. Its function is as follows. Serine/threonine-protein kinase involved in various processes such as cell proliferation, differentiation, migration, transformation and programmed cell death. Extracellular stimuli such as pro-inflammatory cytokines or physical stress stimulate the stress-activated protein kinase/c-Jun N-terminal kinase (SAP/JNK) signaling pathway. In this cascade, two dual specificity kinases MAP2K4/MKK4 and MAP2K7/MKK7 phosphorylate and activate MAPK8/JNK1. In turn, MAPK8/JNK1 phosphorylates a number of transcription factors, primarily components of AP-1 such as JUN, JDP2 and ATF2 and thus regulates AP-1 transcriptional activity. Phosphorylates the replication licensing factor CDT1, inhibiting the interaction between CDT1 and the histone H4 acetylase HBO1 to replication origins. Loss of this interaction abrogates the acetylation required for replication initiation. Promotes stressed cell apoptosis by phosphorylating key regulatory factors including p53/TP53 and Yes-associates protein YAP1. In T-cells, MAPK8 and MAPK9 are required for polarized differentiation of T-helper cells into Th1 cells. Contributes to the survival of erythroid cells by phosphorylating the antagonist of cell death BAD upon EPO stimulation. Mediates starvation-induced BCL2 phosphorylation, BCL2 dissociation from BECN1, and thus activation of autophagy. Phosphorylates STMN2 and hence regulates microtubule dynamics, controlling neurite elongation in cortical neurons. In the developing brain, through its cytoplasmic activity on STMN2, negatively regulates the rate of exit from multipolar stage and of radial migration from the ventricular zone. Phosphorylates several other substrates including heat shock factor protein 4 (HSF4), the deacetylase SIRT1, ELK1, or the E3 ligase ITCH. Phosphorylates the CLOCK-BMAL1 heterodimer and plays a role in the regulation of the circadian clock. Phosphorylates the heat shock transcription factor HSF1, suppressing HSF1-induced transcriptional activity. Phosphorylates POU5F1, which results in the inhibition of POU5F1's transcriptional activity and enhances its proteasomal degradation. Phosphorylates JUND and this phosphorylation is inhibited in the presence of MEN1. In neurons, phosphorylates SYT4 which captures neuronal dense core vesicles at synapses. Phosphorylates EIF4ENIF1/4-ET in response to oxidative stress, promoting P-body assembly. Phosphorylates SIRT6 in response to oxidative stress, stimulating its mono-ADP-ribosyltransferase activity. Phosphorylates NLRP3, promoting assembly of the NLRP3 inflammasome. Phosphorylates ALKBH5 in response to reactive oxygen species (ROS), promoting ALKBH5 sumoylation and inactivation. In terms of biological role, JNK1 isoforms display different binding patterns: beta-1 preferentially binds to c-Jun, whereas alpha-1, alpha-2, and beta-2 have a similar low level of binding to both c-Jun or ATF2. However, there is no correlation between binding and phosphorylation, which is achieved at about the same efficiency by all isoforms. The polypeptide is Mitogen-activated protein kinase 8 (MAPK8) (Homo sapiens (Human)).